A 498-amino-acid chain; its full sequence is Angiopoietin-1 (498 aa).

Positions 1–19 are cleaved as a signal peptide; sequence MTVFLSFAFFAAILTHIGC. Positions 81-119 form a coiled coil; it reads QKLQHLEHVMENYTQWLQKLENYIVENMKSEMAQIQQNA. N-linked (GlcNAc...) asparagine glycosylation is found at Asn92, Asn122, Asn154, Asn243, and Asn295. Residues 153–261 are a coiled coil; it reads LNQTSRLEIQ…LELMDTVHNL (109 aa). The Fibrinogen C-terminal domain occupies 277-497; that stretch reads REEEKPFRDC…STTMMIRPLD (221 aa). 2 cysteine pairs are disulfide-bonded: Cys286-Cys315 and Cys439-Cys452.

In terms of assembly, homooligomer. Interacts with TEK/TIE2. Interacts with SVEP1/polydom. Interacts with THBD; this interaction significantly inhibits the generation of activated PC and TAFIa/CPB2 by the thrombin/thrombomodulin complex.

The protein localises to the secreted. Functionally, binds and activates TEK/TIE2 receptor by inducing its dimerization and tyrosine phosphorylation. Plays an important role in the regulation of angiogenesis, endothelial cell survival, proliferation, migration, adhesion and cell spreading, reorganization of the actin cytoskeleton, but also maintenance of vascular quiescence. Required for normal angiogenesis and heart development during embryogenesis. After birth, activates or inhibits angiogenesis, depending on the context. Inhibits angiogenesis and promotes vascular stability in quiescent vessels, where endothelial cells have tight contacts. In quiescent vessels, ANGPT1 oligomers recruit TEK to cell-cell contacts, forming complexes with TEK molecules from adjoining cells, and this leads to preferential activation of phosphatidylinositol 3-kinase and the AKT1 signaling cascades. In migrating endothelial cells that lack cell-cell adhesions, ANGT1 recruits TEK to contacts with the extracellular matrix, leading to the formation of focal adhesion complexes, activation of PTK2/FAK and of the downstream kinases MAPK1/ERK2 and MAPK3/ERK1, and ultimately to the stimulation of sprouting angiogenesis. Mediates blood vessel maturation/stability. Implicated in endothelial developmental processes later and distinct from that of VEGF. Appears to play a crucial role in mediating reciprocal interactions between the endothelium and surrounding matrix and mesenchyme. The sequence is that of Angiopoietin-1 (Angpt1) from Mus musculus (Mouse).